Here is a 604-residue protein sequence, read N- to C-terminus: Phosphomethylpyrimidine synthase (604 aa).

Residues Asn-218, Met-247, Tyr-276, His-312, 332-334, 373-376, and Glu-412 each bind substrate; these read SRG and DGLR. Position 416 (His-416) interacts with Zn(2+). Position 439 (Tyr-439) interacts with substrate. His-480 serves as a coordination point for Zn(2+). [4Fe-4S] cluster contacts are provided by Cys-560, Cys-563, and Cys-568.

The protein belongs to the ThiC family. Homodimer. Requires [4Fe-4S] cluster as cofactor.

It catalyses the reaction 5-amino-1-(5-phospho-beta-D-ribosyl)imidazole + S-adenosyl-L-methionine = 4-amino-2-methyl-5-(phosphooxymethyl)pyrimidine + CO + 5'-deoxyadenosine + formate + L-methionine + 3 H(+). It functions in the pathway cofactor biosynthesis; thiamine diphosphate biosynthesis. In terms of biological role, catalyzes the synthesis of the hydroxymethylpyrimidine phosphate (HMP-P) moiety of thiamine from aminoimidazole ribotide (AIR) in a radical S-adenosyl-L-methionine (SAM)-dependent reaction. The chain is Phosphomethylpyrimidine synthase from Zymomonas mobilis subsp. mobilis (strain ATCC 31821 / ZM4 / CP4).